A 517-amino-acid polypeptide reads, in one-letter code: Nucleoside transporter FUN26 (517 aa).

The tract at residues 1–63 is disordered; that stretch reads MSTSADTDTI…EREQSVSTEP (63 aa). Over residues 25–44 the composition is skewed to basic and acidic residues; it reads THSEEISRSGEEHESENNEH. Residues serine 45 and serine 58 each carry the phosphoserine modification. 11 helical membrane-spanning segments follow: residues 76–96, 116–136, 151–171, 174–194, 214–234, 243–263, 344–364, 367–387, 411–431, 446–466, and 492–512; these read LSYI…NCIL, IFTS…NIYL, LVWE…HFLL, WFNF…TAMT, MVGQ…LAFI, GGIL…VVMF, LVLS…FASA, VTGL…LWNL, TFIY…FTAI, IVDL…GHVI, and IFVS…VFII.

Belongs to the SLC29A/ENT transporter (TC 2.A.57) family.

It is found in the membrane. Has broad nucleoside selectivity (uridine, adenosine and cytidine) and most likely functions to transport nucleosides across intracellular membranes. In Saccharomyces cerevisiae (strain ATCC 204508 / S288c) (Baker's yeast), this protein is Nucleoside transporter FUN26 (FUN26).